The following is a 142-amino-acid chain: Nucleoside diphosphate kinase (142 aa).

ATP contacts are provided by Lys9, Phe57, Arg85, Thr91, Arg102, and Asn112. Residues 87-106 (AMGATDPAKSEKGTVRGDLG) form a disordered region. His115 serves as the catalytic Pros-phosphohistidine intermediate.

The protein belongs to the NDK family. In terms of assembly, homotetramer. The cofactor is Mg(2+).

Its subcellular location is the cytoplasm. It catalyses the reaction a 2'-deoxyribonucleoside 5'-diphosphate + ATP = a 2'-deoxyribonucleoside 5'-triphosphate + ADP. It carries out the reaction a ribonucleoside 5'-diphosphate + ATP = a ribonucleoside 5'-triphosphate + ADP. In terms of biological role, major role in the synthesis of nucleoside triphosphates other than ATP. The ATP gamma phosphate is transferred to the NDP beta phosphate via a ping-pong mechanism, using a phosphorylated active-site intermediate. The protein is Nucleoside diphosphate kinase of Dehalococcoides mccartyi (strain ATCC BAA-2266 / KCTC 15142 / 195) (Dehalococcoides ethenogenes (strain 195)).